The following is a 41-amino-acid chain: Large ribosomal subunit protein bL36 (41 aa).

The protein belongs to the bacterial ribosomal protein bL36 family.

In Xylella fastidiosa (strain M23), this protein is Large ribosomal subunit protein bL36.